A 360-amino-acid chain; its full sequence is MNPKMILTGVSKKYTLYRNNTEKLKAMFFPKTREQHRDFYALKDINLEVYEGETIGVIGINGSGKSTISNILASVIPPTEGEMTVNGETSLIAINVGLNKNLNGYENIEQKCLMHGFSKKEIEELMPAIEEFADIGDFIDQPVKSYSSGMKSRLGFAISAHTNPDILIVDEALSVGDKTFYQKCKDKIDEFKAQNKTIVFISHNIKEIKNLSDRVLWLHNGEVREFGDKNEVIKQYEDYINWFNKLSKEEKEAHKQELKEMRSLAPSLYEEQENGKAGSGGDGTQPIVQPKRDKQAVKSAVWFFSQLVVFAVIFLTAAYFLVVPQLTDGSGSEELEQVAVGAEVQAGTSMGDIDNSDVSL.

The 222-residue stretch at Leu24–Lys245 folds into the ABC transporter domain. Gly59–Ser66 lines the ATP pocket. The tract at residues Leu246 to Leu360 is unknown. The interval Glu270 to Pro290 is disordered.

Belongs to the ABC transporter superfamily. Teichoic acids exporter (TC 3.A.1.104.1) family. As to quaternary structure, the complex is composed of two ATP-binding proteins (TagH) and two transmembrane proteins (TagG).

It localises to the cell membrane. It catalyses the reaction ATP + H2O + teichoic acidSide 1 = ADP + phosphate + teichoic acidSide 2.. Part of the ABC transporter complex TagGH involved in teichoic acids export. Responsible for energy coupling to the transport system. This chain is Teichoic acids export ATP-binding protein TagH, found in Shouchella clausii (strain KSM-K16) (Alkalihalobacillus clausii).